Consider the following 1143-residue polypeptide: Major DNA-binding protein (1143 aa).

Positions 1140–1143 (RMRL) are required for nuclear localization.

This sequence belongs to the herpesviridae major DNA-binding protein family. Homooligomers. Forms double-helical filaments necessary for the formation of replication compartments within the host nucleus. Interacts with the origin-binding protein. Interacts with the helicase primase complex; this interaction stimulates primer synthesis activity of the helicase-primase complex. Interacts with the DNA polymerase. Interacts with the alkaline exonuclease; this interaction increases its nuclease processivity.

The protein localises to the host nucleus. Plays several crucial roles in viral infection. Participates in the opening of the viral DNA origin to initiate replication by interacting with the origin-binding protein. May disrupt loops, hairpins and other secondary structures present on ssDNA to reduce and eliminate pausing of viral DNA polymerase at specific sites during elongation. Promotes viral DNA recombination by performing strand-transfer, characterized by the ability to transfer a DNA strand from a linear duplex to a complementary single-stranded DNA circle. Can also catalyze the renaturation of complementary single strands. Additionally, reorganizes the host cell nucleus, leading to the formation of prereplicative sites and replication compartments. This process is driven by the protein which can form double-helical filaments in the absence of DNA. This Elephantid herpesvirus 1 (isolate Asian elephant/Berlin/Kiba/1998) (EIHV-1) protein is Major DNA-binding protein.